Here is a 451-residue protein sequence, read N- to C-terminus: uncharacterized protein (451 aa).

Positions 1-451 are disordered; that stretch reads MSETENKTTT…KKEAAKNKSK (451 aa). Residues 9–22 show a composition bias toward low complexity; it reads TTETPTTTDSTVTT. Residues 44–54 show a composition bias toward polar residues; that stretch reads VKNQLSNTRTR. Over residues 73–99 the composition is skewed to basic and acidic residues; that stretch reads KLIDTKERKEKKEKKEKEPKEPKEPKE. Positions 114 to 147 are enriched in acidic residues; the sequence is GDEEEDEEKEEDEEQKEEQSQEEDSEESEEEQNS. Residues 152 to 162 are compositionally biased toward basic residues; the sequence is KKKKKQAKKVA. Basic and acidic residues-rich tracts occupy residues 163-192, 199-210, and 217-230; these read KKETEPKKKEAKPKKEAKPKKETTKKEKEA, STEKKEKEEKPK, and KKDQAAAEKKKDGD. Low complexity predominate over residues 232 to 244; the sequence is STTTTATATTTTD. Basic and acidic residues-rich tracts occupy residues 284–303 and 311–340; these read TEEKKDEEKSEEKEKKETKK and AAAEKKKTAANPTDKKDGENKDVTPSDDKP. Residues 341–355 are compositionally biased toward low complexity; sequence AATTTTTTAAAATTT. Residues 356–383 show a composition bias toward basic and acidic residues; it reads EEPKEKITKPAADKKKAPANKKAEKDQS. A compositionally biased stretch (low complexity) spans 393–425; sequence TTTATTTTTNKDATAPTTTTNKDATAPTTTTTK. The segment covering 441–451 has biased composition (basic and acidic residues); sequence PKKEAAKNKSK.

This is an uncharacterized protein from Dictyostelium discoideum (Social amoeba).